We begin with the raw amino-acid sequence, 244 residues long: Transcriptional regulatory protein AruR (244 aa).

The region spanning R6–I124 is the Response regulatory domain. D60 is modified (4-aspartylphosphate). Positions Q139 to A239 form a DNA-binding region, ompR/PhoB-type.

Phosphorylated by AruS.

Its subcellular location is the cytoplasm. The protein operates within amino-acid degradation; L-arginine degradation [regulation]. Its function is as follows. Member of the two-component regulatory system AruS/AruR, which is involved in the regulation of the arginine transaminase (ATA) pathway in response to exogeneous L-arginine. Regulates transcription of aruH and aruI. This Pseudomonas aeruginosa (strain ATCC 15692 / DSM 22644 / CIP 104116 / JCM 14847 / LMG 12228 / 1C / PRS 101 / PAO1) protein is Transcriptional regulatory protein AruR (aruR).